The following is a 160-amino-acid chain: 3-hydroxyacyl-[acyl-carrier-protein] dehydratase FabZ (160 aa).

The active site involves His-63.

Belongs to the thioester dehydratase family. FabZ subfamily.

Its subcellular location is the cytoplasm. The catalysed reaction is a (3R)-hydroxyacyl-[ACP] = a (2E)-enoyl-[ACP] + H2O. Functionally, involved in unsaturated fatty acids biosynthesis. Catalyzes the dehydration of short chain beta-hydroxyacyl-ACPs and long chain saturated and unsaturated beta-hydroxyacyl-ACPs. This is 3-hydroxyacyl-[acyl-carrier-protein] dehydratase FabZ from Xylella fastidiosa (strain 9a5c).